Reading from the N-terminus, the 907-residue chain is MQDKYSPQDIERAAQDDWRARDAYRVTQDAGKKKFYACSMLPYPSGKLHMGHVRNYTINDMLTRYLRMNGYNVLMPMGWDAFGLPAENAAIKNGMPPARWTRENIAYMKQQMQALGLAIDWSRELATCDPGYYKWNQWLFLKMLDKGIAYRKTQVVNWDPVDQTVLANEQVNEGKGWRTGAVVEKREIPGYYLKITDYAEELLAFVTDDRLPGWPERVKLMQENWIGKSEGLRFAFPHDVRGDDGALIGGGRLYVFTTRADTIMGVTFCAVAPEHPLASHAAKSNPALAAFIDECRSGGTTEAALATQEKKGLRTGLYVTHPLTDEPLEVWVGNYVLMGYGDGAVMGVPAHDERDFAFALKYGIEIRQVVLVDGEHFDYRRWQDWYGDKQRGVTINSDSFSGLHHKEAVQAVAHVLEQKGLGEKKTTWRLRDWGVSRQRYWGTPIPIIHCDQHGAVPVPEKDLPVVLPQDCIPDGTGNPLHSHQGFHAGVTCPVCGKSARRETDTMDTFVDSAWYFMRYCDPKNDQAMVAEGTDYWMRDPQQATGGSGMDQYIGGIEHAILHLLYARFWTKVMRDLGLVKVDEPFNRLLTQGMVLNHIYSRRNDNGGREYFWPQDVEQVHDAAGKIIGARLIRAVGDWPAGSAIDYEGMGTMSKSRNNGVDPQELIGKYGADTARLHTMFTAPPEAALEWNDAAVEGSHRFLRRVWNFGLQLHAAGMTAASASLAGAGAPQTRNPPAFGKPAKALRREIHQLLRQVDYDYQRMQYNTVVSGAMKMLNALENFKASDPASQASDPLALTEGFGILLRCLYPVTPHIAHSLWRDLGYAAAVGELLDAPWPQVDGQALVQDEIELMLQINGKLRGSILVPAQASQAAIERIARASPAALAAGAVPKRVIVVPGRLVNLVF.

The short motif at 42–52 (PYPSGKLHMGH) is the 'HIGH' region element. A 'KMSKS' region motif is present at residues 651-655 (TMSKS). Residue K654 participates in ATP binding.

The protein belongs to the class-I aminoacyl-tRNA synthetase family.

Its subcellular location is the cytoplasm. It carries out the reaction tRNA(Leu) + L-leucine + ATP = L-leucyl-tRNA(Leu) + AMP + diphosphate. The protein is Leucine--tRNA ligase of Verminephrobacter eiseniae (strain EF01-2).